The following is a 207-amino-acid chain: Transcription antitermination protein NusB (207 aa).

Belongs to the NusB family.

Its function is as follows. Involved in transcription antitermination. Required for transcription of ribosomal RNA (rRNA) genes. Binds specifically to the boxA antiterminator sequence of the ribosomal RNA (rrn) operons. In Trichodesmium erythraeum (strain IMS101), this protein is Transcription antitermination protein NusB.